A 569-amino-acid chain; its full sequence is Phosphatase and actin regulator 2 (569 aa).

Residues 1-13 are compositionally biased toward polar residues; sequence MGQTSVSALSPQP. The segment at 1 to 47 is disordered; the sequence is MGQTSVSALSPQPGSVDGLDKASIANSDGPPAGSQTPPFKRKGKLST. Ser-27 is modified (phosphoserine). The residue at position 36 (Thr-36) is a Phosphothreonine. The stretch at 71–96 is one RPEL 1 repeat; the sequence is AVLERKISTRQSREELIRRGLLKELP. Disordered regions lie at residues 98-253 and 295-483; these read QDGD…TGKP and PTLP…QEAK. Positions 140 to 151 are enriched in basic and acidic residues; sequence GPPREEQAEEKT. Positions 162–176 are enriched in low complexity; sequence GSKASSSPSASSTSS. Over residues 212–224 the composition is skewed to polar residues; that stretch reads LSPNTVTSETSSL. A Phosphoserine modification is found at Ser-357. Residues 386-399 show a composition bias toward acidic residues; the sequence is TDDDDEEDDDDDST. RPEL repeat units lie at residues 412 to 437, 450 to 475, and 488 to 513; these read DTLA…QRTS, TKLV…KQKN, and RRLS…RFNE. A compositionally biased stretch (basic and acidic residues) spans 423-444; it reads SKKELEDKNILQRTSEEERQEL. Ser-457 carries the phosphoserine modification. Residues 461–483 show a composition bias toward basic and acidic residues; the sequence is TTEELEQRSILKQKNEEEEQEAK. Phosphoserine is present on Ser-495.

It belongs to the phosphatase and actin regulator family. In terms of assembly, binds PPP1CA and actin. As to expression, expressed in the brain with high levels in the cerebellum, specifically in the Purkinje cell layer, choroid plexus and thalamus (ventral, rhomboid and anterior nuclei). Moderate to high expression in the hippocampus, piriform cortex, olfactory bulb, entorhinal cortex, as well as in geniculate bodies, lamboid septal zone, preoptic area and ventral pallidum (at protein level).

The chain is Phosphatase and actin regulator 2 (Phactr2) from Rattus norvegicus (Rat).